Consider the following 1108-residue polypeptide: DNA-directed RNA polymerase subunit beta (1108 aa).

Belongs to the RNA polymerase beta chain family. As to quaternary structure, in plastids the minimal PEP RNA polymerase catalytic core is composed of four subunits: alpha, beta, beta', and beta''. When a (nuclear-encoded) sigma factor is associated with the core the holoenzyme is formed, which can initiate transcription.

It localises to the plastid. It is found in the chloroplast. It carries out the reaction RNA(n) + a ribonucleoside 5'-triphosphate = RNA(n+1) + diphosphate. DNA-dependent RNA polymerase catalyzes the transcription of DNA into RNA using the four ribonucleoside triphosphates as substrates. The protein is DNA-directed RNA polymerase subunit beta of Gnetum parvifolium (Small-leaved jointfir).